The following is a 991-amino-acid chain: UPF0182 protein RHA1_ro08670 (991 aa).

The next 7 helical transmembrane spans lie at 16 to 36, 61 to 81, 115 to 135, 170 to 190, 214 to 234, 263 to 283, and 291 to 311; these read VMIM…RLVV, LILF…AVVW, FTVG…QASW, LILA…LGTH, VQLA…YWLD, RLIM…AIAV, and MATA…PALI. The interval 902-940 is disordered; that stretch reads TGAVATAPGGDATTPPPTGGQPPAPPPPGAPPAPPPATS. Low complexity predominate over residues 903 to 914; that stretch reads GAVATAPGGDAT. The span at 915–938 shows a compositional bias: pro residues; that stretch reads TPPPTGGQPPAPPPPGAPPAPPPA.

It belongs to the UPF0182 family.

It localises to the cell membrane. In Rhodococcus jostii (strain RHA1), this protein is UPF0182 protein RHA1_ro08670.